Consider the following 472-residue polypeptide: Meiotic spindle formation protein mei-1 (472 aa).

The disordered stretch occupies residues 83-161 (HEAMTRQSGS…TQGILPQNSA (79 aa)). The residue at position 92 (Ser92) is a Phosphoserine; by mbk-2. Composition is skewed to polar residues over residues 134 to 143 (KSTSSMSTNP) and 150 to 161 (NPTQGILPQNSA). Residues 233–240 (GPPGTGKT) and 351–352 (RR) contribute to the ATP site.

It belongs to the AAA ATPase family. Katanin p60 subunit A1 subfamily. As to quaternary structure, homohexamer; ATP hydrolysis initiates a cycle between an open spiral and a closed ring conformation which is probably involved in pulling tubulin dimers out from microtubules. Interacts with mei-2, which may serve as a targeting subunit. Interacts with mel-26, which targets mei-1 for ubiquitin mediated proteolysis. Interacts with phosphatase pph-4.1. Post-translationally, phosphorylated. Phosphorylation by mbk-2 is required for its rapid degradation following meiosis II. Likely dephosphorylated by the PP4 complex composed of catalytic subunit pph-4.1 and regulatory subunit ppfr-1. Polyubiquitination targets the protein for rapid degradation via the ubiquitin system at the end of meiosis. The BTB domain protein mel-26 may serve to specifically target mei-1 for ubiquitination by cul-3 containing complexes. The cul-3 protein is in turn regulated by neddylation by ned-8.

The protein localises to the cytoplasm. It localises to the cytoskeleton. Its subcellular location is the spindle pole. The protein resides in the chromosome. The enzyme catalyses n ATP + n H2O + a microtubule = n ADP + n phosphate + (n+1) alpha/beta tubulin heterodimers.. Its activity is regulated as follows. ATPase activity is stimulated by microtubules, which promote homooligomerization. ATP-dependent microtubule severing is stimulated by interaction with mei-2. Catalytic subunit of a complex which severs microtubules in an ATP-dependent manner. Microtubule severing may promote rapid reorganization of cellular microtubule arrays. Required specifically for meiotic spindle formation in the female germline; the presence of this protein is inimical to the formation of mitotic spindles. In body wall muscles, regulates organization of myosin thick filaments. The protein is Meiotic spindle formation protein mei-1 of Caenorhabditis elegans.